The following is a 377-amino-acid chain: Alanine racemase (377 aa).

The active-site Proton acceptor; specific for D-alanine is Lys37. An N6-(pyridoxal phosphate)lysine modification is found at Lys37. Residue Arg135 participates in substrate binding. Tyr271 (proton acceptor; specific for L-alanine) is an active-site residue. Met319 lines the substrate pocket.

This sequence belongs to the alanine racemase family. Pyridoxal 5'-phosphate is required as a cofactor.

It catalyses the reaction L-alanine = D-alanine. It functions in the pathway amino-acid biosynthesis; D-alanine biosynthesis; D-alanine from L-alanine: step 1/1. Its function is as follows. Catalyzes the interconversion of L-alanine and D-alanine. May also act on other amino acids. This chain is Alanine racemase (alr), found in Helicobacter pylori (strain Shi470).